The chain runs to 793 residues: Methionine--tRNA ligase (793 aa).

Positions 11 to 21 (PYVNNFPHLGN) match the 'HIGH' region motif. Residues C142, C145, C155, and C158 each coordinate Zn(2+). The short motif at 334–338 (KFSKS) is the 'KMSKS' region element. Residue K337 coordinates ATP. Residues 581–590 (SQKDRKKSEK) show a composition bias toward basic and acidic residues. The interval 581–610 (SQKDRKKSEKGCSACKDSGSSKSDAAASSA) is disordered. Residues 591–610 (GCSACKDSGSSKSDAAASSA) are compositionally biased toward low complexity. Positions 622–727 (FSKKIALKTA…PWAAPGTPVI (106 aa)) constitute a tRNA-binding domain.

It belongs to the class-I aminoacyl-tRNA synthetase family. MetG type 1 subfamily. In terms of assembly, homodimer. Requires Zn(2+) as cofactor.

The protein localises to the cytoplasm. It catalyses the reaction tRNA(Met) + L-methionine + ATP = L-methionyl-tRNA(Met) + AMP + diphosphate. Its function is as follows. Is required not only for elongation of protein synthesis but also for the initiation of all mRNA translation through initiator tRNA(fMet) aminoacylation. The protein is Methionine--tRNA ligase of Treponema denticola (strain ATCC 35405 / DSM 14222 / CIP 103919 / JCM 8153 / KCTC 15104).